A 462-amino-acid chain; its full sequence is Spermatogenesis- and oogenesis-specific basic helix-loop-helix-containing protein 2 (462 aa).

In terms of domain architecture, bHLH spans 200–251 (KASFLHSSKEKLRRERIKFCCEQLRTLLPYVKGRKSDVASVIEATVDYVKQV). A disordered region spans residues 422 to 462 (PASSRTASSSIFRGFRESDSGHQASQQPTGPSLQPQDSSYF). Positions 442 to 462 (GHQASQQPTGPSLQPQDSSYF) are enriched in polar residues.

The protein resides in the nucleus. Functionally, probable transcription factor, which may be involved in spermatogenesis and oogenesis. The protein is Spermatogenesis- and oogenesis-specific basic helix-loop-helix-containing protein 2 (Sohlh2) of Rattus norvegicus (Rat).